Here is a 270-residue protein sequence, read N- to C-terminus: Cytochrome c oxidase subunit 3 (270 aa).

7 helical membrane passes run 21 to 41 (PWPFVASFSALIILLGGVLYF), 46 to 66 (GSLVILFFGIFFLLLIIFVWW), 90 to 110 (GIMLFIFSEVILFIAFFWAFF), 131 to 151 (FFSPWDIPFLNTIILLLSGCA), 167 to 187 (AIFSLILTIGLALIFTIFQIY), 205 to 225 (FFMITGLHGFHVIVGTFFLFV), and 248 to 268 (WYWHFVDVVWLFLFVSIYWWG).

Belongs to the cytochrome c oxidase subunit 3 family. As to quaternary structure, component of the cytochrome c oxidase (complex IV, CIV), a multisubunit enzyme composed of a catalytic core of 3 subunits and several supernumerary subunits. The complex exists as a monomer or a dimer and forms supercomplexes (SCs) in the inner mitochondrial membrane with ubiquinol-cytochrome c oxidoreductase (cytochrome b-c1 complex, complex III, CIII).

It is found in the mitochondrion inner membrane. The catalysed reaction is 4 Fe(II)-[cytochrome c] + O2 + 8 H(+)(in) = 4 Fe(III)-[cytochrome c] + 2 H2O + 4 H(+)(out). Component of the cytochrome c oxidase, the last enzyme in the mitochondrial electron transport chain which drives oxidative phosphorylation. The respiratory chain contains 3 multisubunit complexes succinate dehydrogenase (complex II, CII), ubiquinol-cytochrome c oxidoreductase (cytochrome b-c1 complex, complex III, CIII) and cytochrome c oxidase (complex IV, CIV), that cooperate to transfer electrons derived from NADH and succinate to molecular oxygen, creating an electrochemical gradient over the inner membrane that drives transmembrane transport and the ATP synthase. Cytochrome c oxidase is the component of the respiratory chain that catalyzes the reduction of oxygen to water. Electrons originating from reduced cytochrome c in the intermembrane space (IMS) are transferred via the dinuclear copper A center (CU(A)) of subunit 2 and heme A of subunit 1 to the active site in subunit 1, a binuclear center (BNC) formed by heme A3 and copper B (CU(B)). The BNC reduces molecular oxygen to 2 water molecules using 4 electrons from cytochrome c in the IMS and 4 protons from the mitochondrial matrix. In Cyanidium caldarium (Red alga), this protein is Cytochrome c oxidase subunit 3 (COX3).